The chain runs to 161 residues: Nucleotide-binding protein Tbd_1846 (161 aa).

Belongs to the YajQ family.

In terms of biological role, nucleotide-binding protein. The polypeptide is Nucleotide-binding protein Tbd_1846 (Thiobacillus denitrificans (strain ATCC 25259 / T1)).